We begin with the raw amino-acid sequence, 332 residues long: Divalent cation transporter CmaX (332 aa).

The Cytoplasmic portion of the chain corresponds to 1 to 277 (MQAYESGDER…MNRTMYLLGI (277 aa)). A helical transmembrane segment spans residues 278–286 (ITGFFLPMS). At 287–307 (FVTGLLGINVGGIPGADAPHG) the chain is on the periplasmic side. The chain crosses the membrane as a helical span at residues 308–323 (FWLACLLIGGVATFQW). The Cytoplasmic portion of the chain corresponds to 324-332 (WVFRRLRWL).

This sequence belongs to the CorA metal ion transporter (MIT) (TC 1.A.35) family. In terms of assembly, homopentamer.

The protein localises to the cell inner membrane. The catalysed reaction is Zn(2+)(in) = Zn(2+)(out). The enzyme catalyses Cd(2+)(in) = Cd(2+)(out). It carries out the reaction Ni(2+)(in) = Ni(2+)(out). It catalyses the reaction Co(2+)(in) = Co(2+)(out). Functionally, transports divalent cations including Zn(2+), Cd(2+), Ni(2+) and Co(2+). The proton gradient has a small influence on transport suggesting that the transport is probably not proton-dependent. The sequence is that of Divalent cation transporter CmaX from Pseudomonas aeruginosa (strain ATCC 15692 / DSM 22644 / CIP 104116 / JCM 14847 / LMG 12228 / 1C / PRS 101 / PAO1).